The primary structure comprises 588 residues: Protein kinase C iota type (588 aa).

The PB1 domain maps to 18-101; it reads QVRVKAYYRG…SELIIHVFPC (84 aa). The Phorbol-ester/DAG-type zinc-finger motif lies at 133 to 183; sequence GHAFQAKRFNRRAHCAICTDRIWGLGRQGYKCINCKLLVHKKCHKLVTVEC. Positions 194–213 are disordered; it reads GRIDPGSTHPEHPDQVLGKK. Residues 246–514 enclose the Protein kinase domain; the sequence is FDLLRVIGRG…FADIMAHPFF (269 aa). ATP contacts are provided by residues 252–260 and Lys275; that span reads IGRGSYAKV. Residue Asp370 is the Proton acceptor of the active site. Residues Thr404 and Thr556 each carry the phosphothreonine modification. The AGC-kinase C-terminal domain maps to 515 to 586; that stretch reads RNVDWDLMEQ…INPLLMSAEE (72 aa).

The protein belongs to the protein kinase superfamily. AGC Ser/Thr protein kinase family. PKC subfamily.

It carries out the reaction L-seryl-[protein] + ATP = O-phospho-L-seryl-[protein] + ADP + H(+). The catalysed reaction is L-threonyl-[protein] + ATP = O-phospho-L-threonyl-[protein] + ADP + H(+). With respect to regulation, exhibits an elevated basal enzymatic activity and is not regulated by diacylglycerol, phosphatidylserine, phorbol esters or calcium ions. Two specific sites, Thr-404 (activation loop of the kinase domain) and Thr-556 (turn motif), need to be phosphorylated for its full activation. Calcium- and diacylglycerol-independent serine/ threonine-protein kinase that plays a general protective role against apoptotic stimuli, is involved in NF-kappa-B activation, cell survival, differentiation and polarity, and contributes to the regulation of microtubule dynamics in the early secretory pathway. Is required for the formation and maintenance of the zonula adherens during early epithelial development and plays a critical role in organ morphogenesis and in regulating the orientation of cell division. Required for polarized epithelial organization, myocardium coherence and cell connectivity in the early somite stages. Required for heart cone tilt and development of circulatory architecture during embryogenesis. The protein is Protein kinase C iota type (prkci) of Danio rerio (Zebrafish).